Here is a 247-residue protein sequence, read N- to C-terminus: uncharacterized protein (247 aa).

The N-terminal stretch at 1 to 35 (MWGPGVTAEGLSVAPAPPPLLPLLLLLALALVAPS) is a signal peptide. N-linked (GlcNAc...) asparagine glycosylation is present at Asn-57. The helical transmembrane segment at 82–102 (LSGLLILLVLFAIGYFLQRII) threads the bilayer. The disordered stretch occupies residues 109–179 (YPRGQARPGQ…GGRSDPSCAS (71 aa)). Residues 160 to 172 (SGGGGRGRGGGGR) show a composition bias toward gly residues.

The protein resides in the membrane. This is an uncharacterized protein from Homo sapiens (Human).